The sequence spans 402 residues: Type II NADH:quinone oxidoreductase (402 aa).

Residues 12-16 (GAGYA), 39-40 (NK), and valine 83 contribute to the FAD site. Glutamate 172 is an active-site residue. Residues aspartate 302, 319-320 (AQ), and lysine 379 each bind FAD.

It belongs to the NADH dehydrogenase family. FAD serves as cofactor.

Its subcellular location is the cell membrane. The catalysed reaction is a quinone + NADH + H(+) = a quinol + NAD(+). In terms of biological role, alternative, nonproton pumping NADH:quinone oxidoreductase that delivers electrons to the respiratory chain by oxidation of NADH and reduction of quinones, and contributes to the regeneration of NAD(+). The polypeptide is Type II NADH:quinone oxidoreductase (Staphylococcus epidermidis (strain ATCC 35984 / DSM 28319 / BCRC 17069 / CCUG 31568 / BM 3577 / RP62A)).